Consider the following 400-residue polypeptide: Lysophospholipid transporter LplT (400 aa).

Transmembrane regions (helical) follow at residues 19-39 (VIVA…ATLA), 53-73 (VLQM…GQIA), 91-111 (AGAA…LVGI), 139-159 (LMEA…GVLA), 164-184 (IAAL…NLFI), 195-213 (SWRL…VVLW), 227-247 (LFWG…PVAL), 257-277 (YLNA…AKLV), 281-301 (TVSR…IFSL), 304-324 (ALLP…FFVV), 352-372 (NSAM…GVPA), and 373-393 (VAIG…LWIW).

The protein belongs to the major facilitator superfamily. LplT (TC 2.A.1.42) family.

Its subcellular location is the cell inner membrane. Catalyzes the facilitated diffusion of 2-acyl-glycero-3-phosphoethanolamine (2-acyl-GPE) into the cell. This chain is Lysophospholipid transporter LplT, found in Salmonella heidelberg (strain SL476).